Here is a 318-residue protein sequence, read N- to C-terminus: ATP synthase gamma chain (318 aa).

Belongs to the ATPase gamma chain family. F-type ATPases have 2 components, CF(1) - the catalytic core - and CF(0) - the membrane proton channel. CF(1) has five subunits: alpha(3), beta(3), gamma(1), delta(1), epsilon(1). CF(0) has three main subunits: a, b and c.

The protein resides in the cell membrane. Produces ATP from ADP in the presence of a proton gradient across the membrane. The gamma chain is believed to be important in regulating ATPase activity and the flow of protons through the CF(0) complex. This Lactobacillus gasseri (strain ATCC 33323 / DSM 20243 / BCRC 14619 / CIP 102991 / JCM 1131 / KCTC 3163 / NCIMB 11718 / NCTC 13722 / AM63) protein is ATP synthase gamma chain.